The sequence spans 300 residues: Ribosomal RNA small subunit methyltransferase H (300 aa).

Residues 33–35 (GGH), D53, F78, D97, and Q104 each bind S-adenosyl-L-methionine.

The protein belongs to the methyltransferase superfamily. RsmH family.

It localises to the cytoplasm. It catalyses the reaction cytidine(1402) in 16S rRNA + S-adenosyl-L-methionine = N(4)-methylcytidine(1402) in 16S rRNA + S-adenosyl-L-homocysteine + H(+). Its function is as follows. Specifically methylates the N4 position of cytidine in position 1402 (C1402) of 16S rRNA. This chain is Ribosomal RNA small subunit methyltransferase H, found in Karelsulcia muelleri (strain GWSS) (Sulcia muelleri).